Consider the following 211-residue polypeptide: uncharacterized protein (211 aa).

It belongs to the nucleoside deoxyribosyltransferase family.

It is found in the cytoplasm. Its subcellular location is the nucleus. This is an uncharacterized protein from Schizosaccharomyces pombe (strain 972 / ATCC 24843) (Fission yeast).